The chain runs to 461 residues: Chromosomal replication initiator protein DnaA (461 aa).

Residues 1–87 are domain I, interacts with DnaA modulators; the sequence is MAVSLWQQCI…IGSRPSAKPV (87 aa). Residues 87 to 124 are domain II; sequence VVQATAAIRPKPAASKAVEKPTFNAPQAEPAITANHRS. The interval 125–341 is domain III, AAA+ region; sequence NINPTYQFDN…GALNRVIANA (217 aa). Positions 169, 171, 172, and 173 each coordinate ATP. Residues 342–461 are domain IV, binds dsDNA; the sequence is NFTGRPITID…YANLIRTLSS (120 aa).

It belongs to the DnaA family. Oligomerizes as a right-handed, spiral filament on DNA at oriC.

It localises to the cytoplasm. Plays an essential role in the initiation and regulation of chromosomal replication. ATP-DnaA binds to the origin of replication (oriC) to initiate formation of the DNA replication initiation complex once per cell cycle. Binds the DnaA box (a 9 base pair repeat at the origin) and separates the double-stranded (ds)DNA. Forms a right-handed helical filament on oriC DNA; dsDNA binds to the exterior of the filament while single-stranded (ss)DNA is stabiized in the filament's interior. The ATP-DnaA-oriC complex binds and stabilizes one strand of the AT-rich DNA unwinding element (DUE), permitting loading of DNA polymerase. After initiation quickly degrades to an ADP-DnaA complex that is not apt for DNA replication. Binds acidic phospholipids. The protein is Chromosomal replication initiator protein DnaA of Shewanella piezotolerans (strain WP3 / JCM 13877).